The primary structure comprises 479 residues: Dynein regulatory complex subunit 4 (479 aa).

Coiled-coil stretches lie at residues 28–93, 117–170, and 210–347; these read RDQL…LADI, RAEA…FNEK, and EVEE…GLKE.

Belongs to the DRC4 family.

The protein resides in the cytoplasm. Its subcellular location is the cytoskeleton. It localises to the flagellum basal body. In terms of biological role, cytoskeletal linker which probably functions in axonemal and non-axonemal dynein regulation. May play a role in the spermatozoa motility. This is Dynein regulatory complex subunit 4 from Drosophila melanogaster (Fruit fly).